The chain runs to 206 residues: Phosphoribosylglycinamide formyltransferase (206 aa).

Residue 13 to 15 (GTN) participates in N(1)-(5-phospho-beta-D-ribosyl)glycinamide binding. Residues 99–102 (MIIL) and Asn121 contribute to the (6R)-10-formyltetrahydrofolate site. Residue His123 is the Proton donor of the active site. Asp163 is a (6R)-10-formyltetrahydrofolate binding site. Glu192 provides a ligand contact to N(1)-(5-phospho-beta-D-ribosyl)glycinamide.

The protein belongs to the GART family.

It catalyses the reaction N(1)-(5-phospho-beta-D-ribosyl)glycinamide + (6R)-10-formyltetrahydrofolate = N(2)-formyl-N(1)-(5-phospho-beta-D-ribosyl)glycinamide + (6S)-5,6,7,8-tetrahydrofolate + H(+). The protein operates within purine metabolism; IMP biosynthesis via de novo pathway; N(2)-formyl-N(1)-(5-phospho-D-ribosyl)glycinamide from N(1)-(5-phospho-D-ribosyl)glycinamide (10-formyl THF route): step 1/1. This is Phosphoribosylglycinamide formyltransferase (purN) from Dictyostelium discoideum (Social amoeba).